The primary structure comprises 284 residues: Probable endonuclease 4 (284 aa).

Zn(2+) is bound by residues histidine 69, histidine 109, glutamate 145, aspartate 179, histidine 182, histidine 216, aspartate 229, histidine 231, and glutamate 261.

It belongs to the AP endonuclease 2 family. Zn(2+) is required as a cofactor.

The enzyme catalyses Endonucleolytic cleavage to 5'-phosphooligonucleotide end-products.. Its function is as follows. Endonuclease IV plays a role in DNA repair. It cleaves phosphodiester bonds at apurinic or apyrimidinic (AP) sites, generating a 3'-hydroxyl group and a 5'-terminal sugar phosphate. The polypeptide is Probable endonuclease 4 (Klebsiella pneumoniae (strain 342)).